The primary structure comprises 508 residues: Photosystem II CP47 reaction center protein (508 aa).

The next 6 helical transmembrane spans lie at 21–36 (SVHIMHTALVSGWAGS), 101–115 (IVFSGLCFLAAIWHW), 140–156 (GIHLFLAGVACFGFGAF), 203–218 (IAAGTLGILAGLFHLS), 237–252 (VLSSSIAAVFFAAFVV), and 457–472 (TFALLFFFGHIWHGAR).

It belongs to the PsbB/PsbC family. PsbB subfamily. PSII is composed of 1 copy each of membrane proteins PsbA, PsbB, PsbC, PsbD, PsbE, PsbF, PsbH, PsbI, PsbJ, PsbK, PsbL, PsbM, PsbT, PsbX, PsbY, PsbZ, Psb30/Ycf12, at least 3 peripheral proteins of the oxygen-evolving complex and a large number of cofactors. It forms dimeric complexes. It depends on Binds multiple chlorophylls. PSII binds additional chlorophylls, carotenoids and specific lipids. as a cofactor.

It is found in the plastid. The protein localises to the chloroplast thylakoid membrane. Functionally, one of the components of the core complex of photosystem II (PSII). It binds chlorophyll and helps catalyze the primary light-induced photochemical processes of PSII. PSII is a light-driven water:plastoquinone oxidoreductase, using light energy to abstract electrons from H(2)O, generating O(2) and a proton gradient subsequently used for ATP formation. This Oryza nivara (Indian wild rice) protein is Photosystem II CP47 reaction center protein.